Consider the following 147-residue polypeptide: Large ribosomal subunit protein uL13 (147 aa).

This sequence belongs to the universal ribosomal protein uL13 family. In terms of assembly, part of the 50S ribosomal subunit.

In terms of biological role, this protein is one of the early assembly proteins of the 50S ribosomal subunit, although it is not seen to bind rRNA by itself. It is important during the early stages of 50S assembly. The protein is Large ribosomal subunit protein uL13 of Renibacterium salmoninarum (strain ATCC 33209 / DSM 20767 / JCM 11484 / NBRC 15589 / NCIMB 2235).